Consider the following 134-residue polypeptide: Probable glycine cleavage system H protein (134 aa).

Residues 29–110 (TVLVGITDYA…PYEAWIAKIK (82 aa)) form the Lipoyl-binding domain. The residue at position 70 (lysine 70) is an N6-lipoyllysine.

The protein belongs to the GcvH family. In terms of assembly, the glycine cleavage system is composed of four proteins: P, T, L and H. The cofactor is (R)-lipoate.

Functionally, the glycine cleavage system catalyzes the degradation of glycine. The H protein shuttles the methylamine group of glycine from the P protein to the T protein. The protein is Probable glycine cleavage system H protein of Pyrococcus furiosus (strain ATCC 43587 / DSM 3638 / JCM 8422 / Vc1).